The following is a 283-amino-acid chain: 2-dehydro-3-deoxyphosphooctonate aldolase (283 aa).

Belongs to the KdsA family.

It is found in the cytoplasm. The enzyme catalyses D-arabinose 5-phosphate + phosphoenolpyruvate + H2O = 3-deoxy-alpha-D-manno-2-octulosonate-8-phosphate + phosphate. Its pathway is carbohydrate biosynthesis; 3-deoxy-D-manno-octulosonate biosynthesis; 3-deoxy-D-manno-octulosonate from D-ribulose 5-phosphate: step 2/3. It participates in bacterial outer membrane biogenesis; lipopolysaccharide biosynthesis. This chain is 2-dehydro-3-deoxyphosphooctonate aldolase, found in Shewanella frigidimarina (strain NCIMB 400).